The primary structure comprises 482 residues: Dihydrolipoyllysine-residue acetyltransferase component of pyruvate dehydrogenase complex, mitochondrial (482 aa).

A mitochondrion-targeting transit peptide spans Met-1–Tyr-28. One can recognise a Lipoyl-binding domain in the interval His-34–Val-110. Lys-75 carries the N6-lipoyllysine modification. A disordered region spans residues Phe-122–Pro-170. The segment covering Gln-143–Asp-166 has biased composition (basic and acidic residues). Positions Phe-175 to Leu-212 constitute a Peripheral subunit-binding (PSBD) domain. Residues Lys-214–Tyr-251 are disordered. Low complexity predominate over residues Lys-217–Ser-250. Residues His-455 and Asp-459 contribute to the active site.

This sequence belongs to the 2-oxoacid dehydrogenase family. As to quaternary structure, eukaryotic pyruvate dehydrogenase (PDH) complexes are organized as a core consisting of the oligomeric dihydrolipoamide acetyl-transferase (E2), around which are arranged multiple copies of pyruvate dehydrogenase (E1), dihydrolipoamide dehydrogenase (E3) and protein X (E3BP) bound by non-covalent bonds. (R)-lipoate serves as cofactor.

It localises to the mitochondrion matrix. It catalyses the reaction N(6)-[(R)-dihydrolipoyl]-L-lysyl-[protein] + acetyl-CoA = N(6)-[(R)-S(8)-acetyldihydrolipoyl]-L-lysyl-[protein] + CoA. Functionally, the pyruvate dehydrogenase complex catalyzes the overall conversion of pyruvate to acetyl-CoA and CO(2). In Saccharomyces cerevisiae (strain ATCC 204508 / S288c) (Baker's yeast), this protein is Dihydrolipoyllysine-residue acetyltransferase component of pyruvate dehydrogenase complex, mitochondrial (LAT1).